Here is a 150-residue protein sequence, read N- to C-terminus: Monothiol glutaredoxin-5, mitochondrial (150 aa).

A mitochondrion-targeting transit peptide spans 1 to 29; that stretch reads MFLPKFNPIRSFSPILRAKTLLRYQNRMY. In terms of domain architecture, Glutaredoxin spans 35-140; the sequence is RKAIEDAIES…DLLEEAQALV (106 aa). Residue lysine 52 participates in glutathione binding. Cysteine 60 provides a ligand contact to [2Fe-2S] cluster. Residues 92–96, isoleucine 104, and 117–118 each bind glutathione; these read REGIK and CD.

Belongs to the glutaredoxin family. Monothiol subfamily. In terms of assembly, homodimer. Interacts with SSQ1. Interacts with BOL1.

The protein localises to the mitochondrion matrix. Its function is as follows. Monothiol glutaredoxin involved in mitochondrial iron-sulfur (Fe/S) cluster transfer. Receives 2Fe/2S clusters from scaffold protein ISU1 and mediates their transfer to apoproteins, to the 4Fe/FS cluster biosynthesis machinery, or export from mitochondrion. This chain is Monothiol glutaredoxin-5, mitochondrial, found in Saccharomyces cerevisiae (strain ATCC 204508 / S288c) (Baker's yeast).